The primary structure comprises 236 residues: Glucosamine-6-phosphate deaminase (236 aa).

The active-site Proton acceptor; for enolization step is the Asp-62. Residue Asn-128 is the For ring-opening step of the active site. The active-site Proton acceptor; for ring-opening step is the His-130. Glu-135 functions as the For ring-opening step in the catalytic mechanism.

It belongs to the glucosamine/galactosamine-6-phosphate isomerase family. NagB subfamily.

The catalysed reaction is alpha-D-glucosamine 6-phosphate + H2O = beta-D-fructose 6-phosphate + NH4(+). It functions in the pathway amino-sugar metabolism; N-acetylneuraminate degradation; D-fructose 6-phosphate from N-acetylneuraminate: step 5/5. Catalyzes the reversible isomerization-deamination of glucosamine 6-phosphate (GlcN6P) to form fructose 6-phosphate (Fru6P) and ammonium ion. This is Glucosamine-6-phosphate deaminase from Pediococcus pentosaceus (strain ATCC 25745 / CCUG 21536 / LMG 10740 / 183-1w).